The following is a 128-amino-acid chain: MSYQPNKVLEVFDNPKIERDFIIQINMPEFTCLCPKTGQPDFATLHFAYIADKACIELKSLKMYIWLYRNEGAFHEAVTNQILDDLVQVSNPRFIRLKAIFNIRGGVYTTIITEHKQKNWTPKAKVDL.

The active-site Thioimide intermediate is Cys34. The Proton donor role is filled by Asp41. Residues 56 to 58 (IEL) and 75 to 76 (HE) each bind substrate.

Belongs to the GTP cyclohydrolase I family. QueF type 1 subfamily.

It localises to the cytoplasm. It carries out the reaction 7-aminomethyl-7-carbaguanine + 2 NADP(+) = 7-cyano-7-deazaguanine + 2 NADPH + 3 H(+). It functions in the pathway tRNA modification; tRNA-queuosine biosynthesis. In terms of biological role, catalyzes the NADPH-dependent reduction of 7-cyano-7-deazaguanine (preQ0) to 7-aminomethyl-7-deazaguanine (preQ1). The protein is NADPH-dependent 7-cyano-7-deazaguanine reductase of Ruthia magnifica subsp. Calyptogena magnifica.